Here is a 480-residue protein sequence, read N- to C-terminus: MTFEIPDFMPVIPELFVLGMACAILVIDLFVPQSRRDITYGLSQFTLIGAAILTIALASPETRFTFNDTFIADGLSDLLKVAVYLITAVVFLYSRPYLQDRDIYKGEYYVLGLFGVLGMMIMISSYSFLTLYLGLELLSLSLYAMVAFNRDSARASEAAMKYFILGAIASGMLLYGMSILYGITGSLDIKEVSDYLITSGAGLNVPLVFALSFVIVGLAFKLGAVPFHMWVPDVYHGAPTSVTLFIGTAPKLAGLAIIMRLLVDGLGPLHHDWQGMLTILAVLSLAVGNVVAIAQTNIKRMLAYSTISHVGFILMGILAGTHEGYAAALFYTLVYAIVAAGGFGMIILLSRRGFEAENLDDFRGLNERSPWFAFIMLLIMFSMAGVPPTVGFYAKLAVLQAVVQVEMIWLAIFAVIFSIVGAFYYLRAVKIMYFDKPEDESPLPKALDMNVVLSINGLLVIVLGIFPGLLMSLATGAISW.

13 helical membrane passes run 11 to 31, 38 to 58, 74 to 94, 109 to 129, 163 to 183, 200 to 220, 239 to 259, 273 to 293, 301 to 321, 329 to 349, 372 to 392, 405 to 425, and 451 to 471; these read VIPE…DLFV, ITYG…IALA, GLSD…FLYS, YVLG…YSFL, FILG…LYGI, GAGL…GLAF, PTSV…AIIM, WQGM…VVAI, MLAY…LAGT, LFYT…IILL, FAFI…TVGF, VEMI…AFYY, and VVLS…GLLM.

Belongs to the complex I subunit 2 family. NDH-1 is composed of 14 different subunits. Subunits NuoA, H, J, K, L, M, N constitute the membrane sector of the complex.

The protein localises to the cell inner membrane. It carries out the reaction a quinone + NADH + 5 H(+)(in) = a quinol + NAD(+) + 4 H(+)(out). Functionally, NDH-1 shuttles electrons from NADH, via FMN and iron-sulfur (Fe-S) centers, to quinones in the respiratory chain. The immediate electron acceptor for the enzyme in this species is believed to be ubiquinone. Couples the redox reaction to proton translocation (for every two electrons transferred, four hydrogen ions are translocated across the cytoplasmic membrane), and thus conserves the redox energy in a proton gradient. The chain is NADH-quinone oxidoreductase subunit N from Thioalkalivibrio sulfidiphilus (strain HL-EbGR7).